The sequence spans 1356 residues: DNA-directed RNA polymerase subunit beta (1356 aa).

Belongs to the RNA polymerase beta chain family. In terms of assembly, the RNAP catalytic core consists of 2 alpha, 1 beta, 1 beta' and 1 omega subunit. When a sigma factor is associated with the core the holoenzyme is formed, which can initiate transcription.

It carries out the reaction RNA(n) + a ribonucleoside 5'-triphosphate = RNA(n+1) + diphosphate. DNA-dependent RNA polymerase catalyzes the transcription of DNA into RNA using the four ribonucleoside triphosphates as substrates. This Caulobacter vibrioides (strain ATCC 19089 / CIP 103742 / CB 15) (Caulobacter crescentus) protein is DNA-directed RNA polymerase subunit beta.